The following is a 328-amino-acid chain: GMP reductase (328 aa).

Cys177 (thioimidate intermediate) is an active-site residue. Position 206 to 229 (206 to 229 (IVADGGIRYNGDIAKSIRFGASMV)) interacts with NADP(+).

It belongs to the IMPDH/GMPR family. GuaC type 2 subfamily.

It catalyses the reaction IMP + NH4(+) + NADP(+) = GMP + NADPH + 2 H(+). Catalyzes the irreversible NADPH-dependent deamination of GMP to IMP. It functions in the conversion of nucleobase, nucleoside and nucleotide derivatives of G to A nucleotides, and in maintaining the intracellular balance of A and G nucleotides. In Levilactobacillus brevis (strain ATCC 367 / BCRC 12310 / CIP 105137 / JCM 1170 / LMG 11437 / NCIMB 947 / NCTC 947) (Lactobacillus brevis), this protein is GMP reductase.